The primary structure comprises 189 residues: Elongation factor P (189 aa).

K34 carries the N6-(3,6-diaminohexanoyl)-5-hydroxylysine modification.

It belongs to the elongation factor P family. May be beta-lysylated on the epsilon-amino group of Lys-34 by the combined action of EpmA and EpmB, and then hydroxylated on the C5 position of the same residue by EpmC (if this protein is present). Lysylation is critical for the stimulatory effect of EF-P on peptide-bond formation. The lysylation moiety may extend toward the peptidyltransferase center and stabilize the terminal 3-CCA end of the tRNA. Hydroxylation of the C5 position on Lys-34 may allow additional potential stabilizing hydrogen-bond interactions with the P-tRNA.

It localises to the cytoplasm. It functions in the pathway protein biosynthesis; polypeptide chain elongation. Functionally, involved in peptide bond synthesis. Alleviates ribosome stalling that occurs when 3 or more consecutive Pro residues or the sequence PPG is present in a protein, possibly by augmenting the peptidyl transferase activity of the ribosome. Modification of Lys-34 is required for alleviation. This is Elongation factor P from Alcanivorax borkumensis (strain ATCC 700651 / DSM 11573 / NCIMB 13689 / SK2).